The primary structure comprises 308 residues: Methionyl-tRNA formyltransferase (308 aa).

109-112 (SLLP) is a (6S)-5,6,7,8-tetrahydrofolate binding site.

This sequence belongs to the Fmt family.

The catalysed reaction is L-methionyl-tRNA(fMet) + (6R)-10-formyltetrahydrofolate = N-formyl-L-methionyl-tRNA(fMet) + (6S)-5,6,7,8-tetrahydrofolate + H(+). Attaches a formyl group to the free amino group of methionyl-tRNA(fMet). The formyl group appears to play a dual role in the initiator identity of N-formylmethionyl-tRNA by promoting its recognition by IF2 and preventing the misappropriation of this tRNA by the elongation apparatus. This is Methionyl-tRNA formyltransferase from Caulobacter vibrioides (strain NA1000 / CB15N) (Caulobacter crescentus).